Here is a 130-residue protein sequence, read N- to C-terminus: Phosphomevalonate dehydratase small subunit (130 aa).

Ser62 acts as the Proton acceptor in catalysis.

This sequence belongs to the AcnX type II small subunit family. As to quaternary structure, heterodimer composed of a large subunit (PMDh-L) and a small subunit (PMDh-S).

The enzyme catalyses (R)-5-phosphomevalonate = (2E)-3-methyl-5-phosphooxypent-2-enoate + H2O. It functions in the pathway isoprenoid biosynthesis; isopentenyl diphosphate biosynthesis via mevalonate pathway. Functionally, component of a hydro-lyase that catalyzes the dehydration of mevalonate 5-phosphate (MVA5P) to form trans-anhydromevalonate 5-phosphate (tAHMP). Involved in the archaeal mevalonate (MVA) pathway, which provides fundamental precursors for isoprenoid biosynthesis, such as isopentenyl diphosphate (IPP) and dimethylallyl diphosphate (DMAPP). The chain is Phosphomevalonate dehydratase small subunit from Thermococcus onnurineus (strain NA1).